A 307-amino-acid polypeptide reads, in one-letter code: NAD kinase 2 (307 aa).

Asp-77 (proton acceptor) is an active-site residue. NAD(+)-binding positions include 77-78, 151-152, Asp-181, 192-197, and Asn-251; these read DG, NE, and TAYALS.

The protein belongs to the NAD kinase family. It depends on a divalent metal cation as a cofactor.

Its subcellular location is the cytoplasm. It carries out the reaction NAD(+) + ATP = ADP + NADP(+) + H(+). Its function is as follows. Involved in the regulation of the intracellular balance of NAD and NADP, and is a key enzyme in the biosynthesis of NADP. Catalyzes specifically the phosphorylation on 2'-hydroxyl of the adenosine moiety of NAD to yield NADP. This Thermosynechococcus vestitus (strain NIES-2133 / IAM M-273 / BP-1) protein is NAD kinase 2.